We begin with the raw amino-acid sequence, 182 residues long: MALNLCTSPKWIGTTVFDSASSSKPSLASSFSTTSFSSSILCSKRVGLQRLSLRRSISVSVRSSLETAGPTVTVGKVTEVNKDTFWPIVNAAGDKTVVLDMFTKWCGPCKVIAPLYEELSQKYLDVVFLKLDCNQDNKSLAKELGIKVVPTFKILKDNKIVKEVTGAKFDDLVAAIDTVRSS.

The transit peptide at 1-69 (MALNLCTSPK…SVRSSLETAG (69 aa)) directs the protein to the chloroplast. A Thioredoxin domain is found at 70–181 (PTVTVGKVTE…LVAAIDTVRS (112 aa)). Residues cysteine 106 and cysteine 109 each act as nucleophile in the active site. Cysteine 106 and cysteine 109 are joined by a disulfide.

It belongs to the thioredoxin family. Plant F-type subfamily. Forms a complex with heterodimeric ferredoxin-thioredoxin reductase (FTR) and ferredoxin.

It localises to the plastid. The protein localises to the chloroplast. In terms of biological role, participates in various redox reactions through the reversible oxidation of the active center dithiol to a disulfide. The F form is known to activate a number of enzymes of the photosynthetic carbon cycle. The sequence is that of Thioredoxin F-type, chloroplastic from Pisum sativum (Garden pea).